Reading from the N-terminus, the 503-residue chain is MSAALRFDNIGKVFPGVRALDGISFDVHAGEVHGLMGENGAGKSTLLKILGGEYQPDAGSVLVDGQPVQFASAAASIAAGIAVIHQELQYVPDLTVAENLLLGRLPNAFGWVRKREAKRYVRERLAAMGVDLDPDAKLGRLSIAQRQMVEICKALMRNARVIALDEPTSSLSHRETEVLFKLVDDLRAQGRALIYISHRMDEIYRLCNACTIFRDGRKIASHESLADVPRERLVAEMVGREISDIYHYAPRALGDVRFAAEGIDGPALREPASFSVRAGEIVGFFGLVGAGRSELMRLVYGADHRRAGVLTLDGARIDVKRTGDAIRHGIVLCPEDRKEEGIIAIASVAENINISCRRHSLRAGLFINRKAESETADRFIQRLKIKTPNRRQKIRFLSGGNQQKAILSRWLAEPDLKVVILDEPTRGIDVGAKHEIYDVIYRLAERGCAIVMVSSELPEVLGVSDRIVVMREGRIAGELPREQANEHAVLSLALPQTSAVEAA.

ABC transporter domains are found at residues 5-240 (LRFD…MVGR) and 251-497 (RALG…LPQT). ATP is bound at residue 37-44 (GENGAGKS).

This sequence belongs to the ABC transporter superfamily. Arabinose importer (TC 3.A.1.2.2) family. In terms of assembly, the complex is composed of two ATP-binding proteins (AraG), two transmembrane proteins (AraH) and a solute-binding protein (AraF).

Its subcellular location is the cell inner membrane. The enzyme catalyses L-arabinose(out) + ATP + H2O = L-arabinose(in) + ADP + phosphate + H(+). Part of the ABC transporter complex AraFGH involved in arabinose import. Responsible for energy coupling to the transport system. In Burkholderia lata (strain ATCC 17760 / DSM 23089 / LMG 22485 / NCIMB 9086 / R18194 / 383), this protein is Arabinose import ATP-binding protein AraG 1.